The chain runs to 558 residues: Potassium-transporting ATPase potassium-binding subunit 1 (558 aa).

A run of 12 helical transmembrane segments spans residues 1-21, 66-86, 127-147, 166-186, 245-265, 281-301, 327-347, 354-374, 377-397, 416-436, 482-502, and 531-551; these read MEIILFLTMMVMIAYVFSGYL, FNGFMGVITFVLLIVQQWLFL, MIVMTYLMFTSSASGYAVCIA, IVRFIVRVLLPLSCLISILLM, IWSNFIEMGSMMLLPMSMLFL, ALILFVAMFFIFIAILTLTMW, FGAGLSALFTVITTAFTTGSV, LTPLGGLGPMVLMMLNVVFGG, VGLMNLLIYVLLTLFICSLMV, IVLVFLIHPILILVFSALAFM, ISTGIIMLLSRYIPIILQLMI, and IVFIVLLSGLTFIPVLLLGPI.

The protein belongs to the KdpA family. In terms of assembly, the system is composed of three essential subunits: KdpA, KdpB and KdpC.

The protein localises to the cell membrane. Part of the high-affinity ATP-driven potassium transport (or Kdp) system, which catalyzes the hydrolysis of ATP coupled with the electrogenic transport of potassium into the cytoplasm. This subunit binds the extracellular potassium ions and delivers the ions to the membrane domain of KdpB through an intramembrane tunnel. This Staphylococcus aureus (strain MRSA252) protein is Potassium-transporting ATPase potassium-binding subunit 1.